Reading from the N-terminus, the 301-residue chain is Pantothenate synthetase (301 aa).

Met30 to His37 provides a ligand contact to ATP. His37 serves as the catalytic Proton donor. Gln61 contributes to the (R)-pantoate binding site. Gln61 contacts beta-alanine. ATP is bound at residue Gly149–Asp152. (R)-pantoate is bound at residue Gln155. ATP contacts are provided by residues Val178 and Met186–Arg189.

Belongs to the pantothenate synthetase family. As to quaternary structure, homodimer.

It localises to the cytoplasm. It carries out the reaction (R)-pantoate + beta-alanine + ATP = (R)-pantothenate + AMP + diphosphate + H(+). Its pathway is cofactor biosynthesis; (R)-pantothenate biosynthesis; (R)-pantothenate from (R)-pantoate and beta-alanine: step 1/1. Its function is as follows. Catalyzes the condensation of pantoate with beta-alanine in an ATP-dependent reaction via a pantoyl-adenylate intermediate. The protein is Pantothenate synthetase of Vibrio vulnificus (strain CMCP6).